We begin with the raw amino-acid sequence, 120 residues long: FK506-binding protein 1B (120 aa).

The tract at residues 1–24 is disordered; that stretch reads MNPPQGVTKTILRPGNGRDSPHTG. Residues 24–120 form the PPIase FKBP-type domain; it reads GDTVIIDYTG…LVLYVCSPAG (97 aa).

The protein belongs to the FKBP-type PPIase family. FKBP1 subfamily.

The catalysed reaction is [protein]-peptidylproline (omega=180) = [protein]-peptidylproline (omega=0). Its function is as follows. PPIases accelerate the folding of proteins. It catalyzes the cis-trans isomerization of proline imidic peptide bonds in oligopeptides. This Emericella nidulans (strain FGSC A4 / ATCC 38163 / CBS 112.46 / NRRL 194 / M139) (Aspergillus nidulans) protein is FK506-binding protein 1B (FKBP3).